The following is a 425-amino-acid chain: Calreticulin-1 (425 aa).

The signal sequence occupies residues 1 to 22; that stretch reads MAKLNPKFISLILFALVVIVSA. A glycan (N-linked (GlcNAc...) asparagine) is linked at Asn-59. Cys-108 and Cys-140 are joined by a disulfide. Residues Tyr-112, Lys-114, Tyr-131, and Asp-138 each contribute to the an alpha-D-glucoside site. Asn-154 carries an N-linked (GlcNAc...) asparagine glycan. Tandem repeats lie at residues 194-205, 213-224, 230-241, 248-259, 263-273, 277-287, and 291-301. The tract at residues 194–259 is 4 X approximate repeats; it reads KQTGSLYSDW…DAKKPEDWDD (66 aa). Basic and acidic residues-rich tracts occupy residues 213 to 235 and 241 to 255; these read DPSAKKPEDWDDKEYIPDPEDTK and DIPKEIPDTDAKKPE. The segment at 213-281 is disordered; sequence DPSAKKPEDW…NPEYNGEWKP (69 aa). Residues 263-301 are 3 X approximate repeats; the sequence is GEWTAPTIPNPEYNGEWKPKKIKNPAYKGKWKAPMIDNP. Glu-321 contacts an alpha-D-glucoside. Over residues 348-378 the composition is skewed to basic and acidic residues; it reads EETWGKHKDAEKAAFDEAEKKREEEESKDAP. The interval 348–425 is disordered; it reads EETWGKHKDA…EETDAAHDEL (78 aa). Positions 379-398 are enriched in acidic residues; the sequence is AESDAEEEAEDDDNEGDDSD. Ser-381 and Ser-397 each carry phosphoserine. The N-linked (GlcNAc...) asparagine glycan is linked to Asn-399. Residues 399 to 412 show a composition bias toward basic and acidic residues; the sequence is NESKSEETKEAEET. Positions 422–425 match the Prevents secretion from ER motif; that stretch reads HDEL.

It belongs to the calreticulin family.

Its subcellular location is the endoplasmic reticulum lumen. Functionally, molecular calcium-binding chaperone promoting folding, oligomeric assembly and quality control in the ER via the calreticulin/calnexin cycle. This lectin may interact transiently with almost all of the monoglucosylated glycoproteins that are synthesized in the ER. In Arabidopsis thaliana (Mouse-ear cress), this protein is Calreticulin-1 (CRT1).